Consider the following 167-residue polypeptide: CS6 fimbrial subunit B (167 aa).

The signal sequence occupies residues 1–21; it reads MLKKIISAIALIAGTSGVVNA.

The protein resides in the fimbrium. The chain is CS6 fimbrial subunit B (cssB) from Escherichia coli.